The primary structure comprises 120 residues: uncharacterized protein (120 aa).

This is an uncharacterized protein from Saccharomyces cerevisiae (strain ATCC 204508 / S288c) (Baker's yeast).